The following is a 171-amino-acid chain: Large ribosomal subunit protein uL10 (171 aa).

The protein belongs to the universal ribosomal protein uL10 family. In terms of assembly, part of the ribosomal stalk of the 50S ribosomal subunit. The N-terminus interacts with L11 and the large rRNA to form the base of the stalk. The C-terminus forms an elongated spine to which L12 dimers bind in a sequential fashion forming a multimeric L10(L12)X complex.

Its function is as follows. Forms part of the ribosomal stalk, playing a central role in the interaction of the ribosome with GTP-bound translation factors. This Lactococcus lactis subsp. lactis (strain IL1403) (Streptococcus lactis) protein is Large ribosomal subunit protein uL10 (rplJ).